Reading from the N-terminus, the 193-residue chain is uncharacterized protein (193 aa).

Residues Pro55–Trp94 form a disordered region. A compositionally biased stretch (pro residues) spans Ala71–Leu82.

This is an uncharacterized protein from Homo sapiens (Human).